The chain runs to 149 residues: UPF0179 protein Hlac_2319 (149 aa).

It belongs to the UPF0179 family.

This chain is UPF0179 protein Hlac_2319, found in Halorubrum lacusprofundi (strain ATCC 49239 / DSM 5036 / JCM 8891 / ACAM 34).